A 451-amino-acid polypeptide reads, in one-letter code: tRNA-2-methylthio-N(6)-dimethylallyladenosine synthase (451 aa).

One can recognise an MTTase N-terminal domain in the interval 11–127 (RHYHITTFGC…LEDLLQQVFD (117 aa)). The [4Fe-4S] cluster site is built by cysteine 20, cysteine 56, cysteine 90, cysteine 162, cysteine 166, and cysteine 169. Residues 148–385 (RDSTITAWVN…NHLVAQKAAE (238 aa)) enclose the Radical SAM core domain. The TRAM domain occupies 388–451 (QRYLGRIEEV…RAFSLTGEIV (64 aa)).

The protein belongs to the methylthiotransferase family. MiaB subfamily. As to quaternary structure, monomer. The cofactor is [4Fe-4S] cluster.

Its subcellular location is the cytoplasm. The catalysed reaction is N(6)-dimethylallyladenosine(37) in tRNA + (sulfur carrier)-SH + AH2 + 2 S-adenosyl-L-methionine = 2-methylsulfanyl-N(6)-dimethylallyladenosine(37) in tRNA + (sulfur carrier)-H + 5'-deoxyadenosine + L-methionine + A + S-adenosyl-L-homocysteine + 2 H(+). Its function is as follows. Catalyzes the methylthiolation of N6-(dimethylallyl)adenosine (i(6)A), leading to the formation of 2-methylthio-N6-(dimethylallyl)adenosine (ms(2)i(6)A) at position 37 in tRNAs that read codons beginning with uridine. This chain is tRNA-2-methylthio-N(6)-dimethylallyladenosine synthase, found in Rippkaea orientalis (strain PCC 8801 / RF-1) (Cyanothece sp. (strain PCC 8801)).